The chain runs to 311 residues: Olfactory receptor 8B8 (311 aa).

Over 1–25 (MAAENSSFVTQFILAGLTDQPGVQI) the chain is Extracellular. N-linked (GlcNAc...) asparagine glycosylation occurs at asparagine 5. The chain crosses the membrane as a helical span at residues 26–46 (PLFFLFLGFYVVTVVGNLGLI). Residues 47–54 (TLIRLNSH) are Cytoplasmic-facing. The helical transmembrane segment at 55-75 (LHTPMYFFLYNLSFIDFCYSS) threads the bilayer. The Extracellular segment spans residues 76 to 99 (VITPKMLMSFVLKKNSISYAGCMT). A disulfide bridge links cysteine 97 with cysteine 189. Residues 100–120 (QLFFFLFFVVSESFILSAMAY) form a helical membrane-spanning segment. The Cytoplasmic segment spans residues 121–139 (DRYVAICNPLLYMVTMSPQ). The helical transmembrane segment at 140–160 (VCFLLLLGVYGMGFAGAMAHT) threads the bilayer. Residues 161 to 197 (ACMMGVTFCANNLVNHYMCDILPLLECACTSTYVNEL) are Extracellular-facing. The chain crosses the membrane as a helical span at residues 198 to 217 (VVFVVVGIDIGVPTVTIFIS). The Cytoplasmic portion of the chain corresponds to 218–237 (YALILSSIFHIDSTEGRSKA). A helical membrane pass occupies residues 238 to 258 (FSTCSSHIIAVSLFFGSGAFM). Residues 259–271 (YLKPFSLLAMNQG) lie on the Extracellular side of the membrane. Residues 272–292 (KVSSLFYTTVVPMLNPLIYSL) traverse the membrane as a helical segment. Residues 293 to 311 (RNKDVKVALKKILNKNAFS) lie on the Cytoplasmic side of the membrane.

It belongs to the G-protein coupled receptor 1 family. In terms of tissue distribution, expressed in the tongue and testis.

It is found in the cell membrane. Odorant receptor (Potential). May be involved in taste perception. The sequence is that of Olfactory receptor 8B8 from Homo sapiens (Human).